The sequence spans 135 residues: Transcription antitermination protein NusB (135 aa).

This sequence belongs to the NusB family.

In terms of biological role, involved in transcription antitermination. Required for transcription of ribosomal RNA (rRNA) genes. Binds specifically to the boxA antiterminator sequence of the ribosomal RNA (rrn) operons. The chain is Transcription antitermination protein NusB from Lacticaseibacillus casei (strain BL23) (Lactobacillus casei).